The primary structure comprises 368 residues: MPKKTDTPAYKPSIYSLTRDELIAWAIEHGEKKFRASQIWDWLYKKRVQSFDEMTNISKDFIALLNENFVVNPLKQRIVQESADGTVKYLFELPDGMLIETVLMRQHYGLSVCVTTQVGCNIGCTFCASGLIKKQRDLNNGEITAQIMLVQKYFDERGQGERVSHIVVMGIGEPFDNYTNVLKFLRTVNDDNGLAIGARHITVSTSGLAHKIREFANEGVQVNLAVSLHAPNNDLRSSIMRINRSFPLEKLFAAIEYYIETTNRRVTFEYIMLNGVNDTPENAQELADLTKKIRKLSYVNLIPYNPVSEHDQYSRSPKERVEAFYDVLKKNGVNCVVRQEHGTDIDAACGQLRSNTMKRDRQKAKVGQ.

The active-site Proton acceptor is Glu-100. Residues 106-344 form the Radical SAM core domain; the sequence is QHYGLSVCVT…CVVRQEHGTD (239 aa). An intrachain disulfide couples Cys-113 to Cys-349. Positions 120, 124, and 127 each coordinate [4Fe-4S] cluster. S-adenosyl-L-methionine contacts are provided by residues 172 to 173, Ser-204, 227 to 229, and Asn-305; these read GE and SLH. The active-site S-methylcysteine intermediate is Cys-349.

It belongs to the radical SAM superfamily. RlmN family. The cofactor is [4Fe-4S] cluster.

It is found in the cytoplasm. The catalysed reaction is adenosine(2503) in 23S rRNA + 2 reduced [2Fe-2S]-[ferredoxin] + 2 S-adenosyl-L-methionine = 2-methyladenosine(2503) in 23S rRNA + 5'-deoxyadenosine + L-methionine + 2 oxidized [2Fe-2S]-[ferredoxin] + S-adenosyl-L-homocysteine. It carries out the reaction adenosine(37) in tRNA + 2 reduced [2Fe-2S]-[ferredoxin] + 2 S-adenosyl-L-methionine = 2-methyladenosine(37) in tRNA + 5'-deoxyadenosine + L-methionine + 2 oxidized [2Fe-2S]-[ferredoxin] + S-adenosyl-L-homocysteine. Functionally, specifically methylates position 2 of adenine 2503 in 23S rRNA and position 2 of adenine 37 in tRNAs. The sequence is that of Probable dual-specificity RNA methyltransferase RlmN from Streptococcus agalactiae serotype V (strain ATCC BAA-611 / 2603 V/R).